The chain runs to 363 residues: UDP-N-acetylglucosamine--N-acetylmuramyl-(pentapeptide) pyrophosphoryl-undecaprenol N-acetylglucosamine transferase (363 aa).

UDP-N-acetyl-alpha-D-glucosamine-binding positions include Thr15 to Gly17, Asn127, Arg163, Ser191, Ile244, Ala263 to Glu268, and Gln288.

The protein belongs to the glycosyltransferase 28 family. MurG subfamily.

Its subcellular location is the cell inner membrane. It carries out the reaction di-trans,octa-cis-undecaprenyl diphospho-N-acetyl-alpha-D-muramoyl-L-alanyl-D-glutamyl-meso-2,6-diaminopimeloyl-D-alanyl-D-alanine + UDP-N-acetyl-alpha-D-glucosamine = di-trans,octa-cis-undecaprenyl diphospho-[N-acetyl-alpha-D-glucosaminyl-(1-&gt;4)]-N-acetyl-alpha-D-muramoyl-L-alanyl-D-glutamyl-meso-2,6-diaminopimeloyl-D-alanyl-D-alanine + UDP + H(+). The protein operates within cell wall biogenesis; peptidoglycan biosynthesis. Its function is as follows. Cell wall formation. Catalyzes the transfer of a GlcNAc subunit on undecaprenyl-pyrophosphoryl-MurNAc-pentapeptide (lipid intermediate I) to form undecaprenyl-pyrophosphoryl-MurNAc-(pentapeptide)GlcNAc (lipid intermediate II). The protein is UDP-N-acetylglucosamine--N-acetylmuramyl-(pentapeptide) pyrophosphoryl-undecaprenol N-acetylglucosamine transferase of Pectobacterium carotovorum subsp. carotovorum (strain PC1).